The chain runs to 160 residues: Sec-independent protein translocase protein TatB (160 aa).

The helical transmembrane segment at 1–21 (MFGMGFFEILVVLVVAIIFLG) threads the bilayer. The disordered stretch occupies residues 118 to 160 (HLNEEVSNEEALNKEVSSDESPKEVQLATDNNTKEHDKEKENV). Composition is skewed to basic and acidic residues over residues 128–140 (ALNK…ESPK) and 149–160 (NTKEHDKEKENV).

Belongs to the TatB family. The Tat system comprises two distinct complexes: a TatABC complex, containing multiple copies of TatA, TatB and TatC subunits, and a separate TatA complex, containing only TatA subunits. Substrates initially bind to the TatABC complex, which probably triggers association of the separate TatA complex to form the active translocon.

The protein localises to the cell inner membrane. Functionally, part of the twin-arginine translocation (Tat) system that transports large folded proteins containing a characteristic twin-arginine motif in their signal peptide across membranes. Together with TatC, TatB is part of a receptor directly interacting with Tat signal peptides. TatB may form an oligomeric binding site that transiently accommodates folded Tat precursor proteins before their translocation. This Helicobacter pylori (strain ATCC 700392 / 26695) (Campylobacter pylori) protein is Sec-independent protein translocase protein TatB.